The chain runs to 157 residues: MSKKVTNIVEELVTPILADMDLELVDIEYVKEGKNWFLRVFIDSDNGVDIEQCGMVSEKLSEKLDEVDPIPHNYFLEVSSPGAERPLKKPKDFTKAIGKNVYIKTYEPIEGEKEFEGELIGFDGTTVSVTVKDKTRKKTIDIPYEKVASARLAVIFF.

This sequence belongs to the RimP family.

The protein resides in the cytoplasm. Its function is as follows. Required for maturation of 30S ribosomal subunits. This Geobacillus sp. (strain WCH70) protein is Ribosome maturation factor RimP.